Reading from the N-terminus, the 574-residue chain is Secreted lipase 1 (574 aa).

Positions 1–17 are cleaved as a signal peptide; sequence MKLSLVPIFALLSTAFA. Cys-95 and Cys-132 are joined by a disulfide. Residue Ser-244 is the Acyl-ester intermediate of the active site. Residues Cys-303 and Cys-312 are joined by a disulfide bond. A glycan (N-linked (GlcNAc...) asparagine) is linked at Asn-323. The active-site Charge relay system is Glu-376. Residue Asn-386 is glycosylated (N-linked (GlcNAc...) asparagine). The active-site Charge relay system is the His-489. A glycan (N-linked (GlcNAc...) asparagine) is linked at Asn-524.

This sequence belongs to the type-B carboxylesterase/lipase family.

The protein localises to the secreted. The enzyme catalyses a carboxylic ester + H2O = an alcohol + a carboxylate + H(+). In terms of biological role, secreted lipase that allows the use of hydrolyzed lipids as carbon sources. Has highest activity with methyl umbelliferyl oleate (C18:1), whereas much lower activities are obtained with the respective esters of palmitate (C16:0) and stearate (C18:0) (24% and 12% of the activity obtained with umbelliferyl oleate, respectively). Hydrolyzes 1- and 3-positioned ester bonds in preference to 2-positioned ester bonds. The production rate of monoglycerides is lower than that of diacylglycerides. Seems not required for the penetration of intact host tissue. This chain is Secreted lipase 1, found in Botryotinia fuckeliana (strain B05.10) (Noble rot fungus).